We begin with the raw amino-acid sequence, 279 residues long: Very long chain fatty acid elongase 2 (279 aa).

Helical transmembrane passes span 12-32 (WFLL…LLSI), 50-70 (ILTL…VELV), 98-118 (VLWW…FFVL), 136-156 (MFNI…FFGP), 158-178 (LNSF…FPSM), 188-208 (LTQA…SAVV), and 213-233 (FPFG…ILFL). The Di-lysine motif signature appears at 276–279 (KKVQ).

The protein belongs to the ELO family. ELOVL2 subfamily. Interacts with TECR.

It localises to the endoplasmic reticulum membrane. It catalyses the reaction a very-long-chain acyl-CoA + malonyl-CoA + H(+) = a very-long-chain 3-oxoacyl-CoA + CO2 + CoA. It carries out the reaction (7Z,10Z,13Z,16Z,19Z)-docosapentaenoyl-CoA + malonyl-CoA + H(+) = (9Z,12Z,15Z,18Z,21Z)-3-oxotetracosapentaenoyl-CoA + CO2 + CoA. The catalysed reaction is (5Z,8Z,11Z,14Z,17Z)-eicosapentaenoyl-CoA + malonyl-CoA + H(+) = 3-oxo-(7Z,10Z,13Z,16Z,19Z)-docosapentaenoyl-CoA + CO2 + CoA. The enzyme catalyses (5Z,8Z,11Z,14Z)-eicosatetraenoyl-CoA + malonyl-CoA + H(+) = (7Z,10Z,13Z,16Z)-3-oxodocosatetraenoyl-CoA + CO2 + CoA. It catalyses the reaction (7Z,10Z,13Z,16Z)-docosatetraenoyl-CoA + malonyl-CoA + H(+) = (9Z,12Z,15Z,18Z)-3-oxotetracosatetraenoyl-CoA + CO2 + CoA. The protein operates within lipid metabolism; polyunsaturated fatty acid biosynthesis. In terms of biological role, catalyzes the first and rate-limiting reaction of the four reactions that constitute the long-chain fatty acids elongation cycle. This endoplasmic reticulum-bound enzymatic process allows the addition of 2 carbons to the chain of long- and very long-chain fatty acids (VLCFAs) per cycle. Condensing enzyme that catalyzes the synthesis of polyunsaturated very long chain fatty acid (C20- and C22-PUFA), acting specifically toward polyunsaturated acyl-CoA with the higher activity toward C20:4(n-6) acyl-CoA. May participate in the production of polyunsaturated VLCFAs of different chain lengths that are involved in multiple biological processes as precursors of membrane lipids and lipid mediators. The protein is Very long chain fatty acid elongase 2 of Rattus norvegicus (Rat).